Here is a 241-residue protein sequence, read N- to C-terminus: Orotidine 5'-phosphate decarboxylase (241 aa).

Residues D15, K37, D64–T73, T126, R187, Q196, G216, and R217 contribute to the substrate site. The Proton donor role is filled by K66.

The protein belongs to the OMP decarboxylase family. Type 1 subfamily. As to quaternary structure, homodimer.

It catalyses the reaction orotidine 5'-phosphate + H(+) = UMP + CO2. It functions in the pathway pyrimidine metabolism; UMP biosynthesis via de novo pathway; UMP from orotate: step 2/2. Catalyzes the decarboxylation of orotidine 5'-monophosphate (OMP) to uridine 5'-monophosphate (UMP). The chain is Orotidine 5'-phosphate decarboxylase from Trichlorobacter lovleyi (strain ATCC BAA-1151 / DSM 17278 / SZ) (Geobacter lovleyi).